A 277-amino-acid polypeptide reads, in one-letter code: Urease accessory protein UreD (277 aa).

The protein belongs to the UreD family. UreD, UreF and UreG form a complex that acts as a GTP-hydrolysis-dependent molecular chaperone, activating the urease apoprotein by helping to assemble the nickel containing metallocenter of UreC. The UreE protein probably delivers the nickel.

The protein resides in the cytoplasm. Its function is as follows. Required for maturation of urease via the functional incorporation of the urease nickel metallocenter. This Flavobacterium johnsoniae (strain ATCC 17061 / DSM 2064 / JCM 8514 / BCRC 14874 / CCUG 350202 / NBRC 14942 / NCIMB 11054 / UW101) (Cytophaga johnsonae) protein is Urease accessory protein UreD.